The following is a 321-amino-acid chain: Flagellin C (321 aa).

It belongs to the bacterial flagellin family.

The protein resides in the secreted. It localises to the bacterial flagellum. Functionally, flagellin is the subunit protein which polymerizes to form the filaments of bacterial flagella. This Rhizobium meliloti (strain 1021) (Ensifer meliloti) protein is Flagellin C (flaC).